The primary structure comprises 280 residues: 4-diphosphocytidyl-2-C-methyl-D-erythritol kinase (280 aa).

Residue K8 is part of the active site. 91–101 (PVAAGLAGGST) is a binding site for ATP. Residue D133 is part of the active site.

The protein belongs to the GHMP kinase family. IspE subfamily.

The catalysed reaction is 4-CDP-2-C-methyl-D-erythritol + ATP = 4-CDP-2-C-methyl-D-erythritol 2-phosphate + ADP + H(+). The protein operates within isoprenoid biosynthesis; isopentenyl diphosphate biosynthesis via DXP pathway; isopentenyl diphosphate from 1-deoxy-D-xylulose 5-phosphate: step 3/6. Functionally, catalyzes the phosphorylation of the position 2 hydroxy group of 4-diphosphocytidyl-2C-methyl-D-erythritol. This Clostridium botulinum (strain ATCC 19397 / Type A) protein is 4-diphosphocytidyl-2-C-methyl-D-erythritol kinase.